A 926-amino-acid chain; its full sequence is Rap guanine nucleotide exchange factor 3 (926 aa).

S79 is subject to Phosphoserine. The DEP domain maps to 110-186; that stretch reads ATYPTLIRDR…RDAQFYRFPG (77 aa). The tract at residues 218–242 is interaction with PDE3B; it reads TVALRKSPGQRTDEELDLIFEELVH. 3',5'-cyclic AMP-binding positions include 311-314 and 321-322; these read GQLA and RA. Positions 369–388 are disordered; that stretch reads TSQGAGPSRPPTPGRNRYTV. The N-terminal Ras-GEF domain maps to 384–521; it reads NRYTVMSGTP…EQYPERRRHH (138 aa). The interaction with PDE3B stretch occupies residues 398-422; sequence ELLLEAMRPDSSAHDPTETFLSDFL. 2 positions are modified to phosphoserine: S531 and S867. Residues 665–892 form the Ras-GEF domain; sequence SAKDLAGQLT…SRISTCSEQS (228 aa).

As to quaternary structure, interacts with PDE3B and PIK3R6; form a signaling complex that regulates phosphatidylinositol 3-kinase gamma in angiogenesis. As to expression, expressed at low levels in adult brain. Strongly expressed in parts of the neonatal brain, including the septum and the thalamus.

The protein resides in the cytoplasm. Its subcellular location is the membrane. Guanine nucleotide exchange factor (GEF) for RAP1A and RAP2A small GTPases that is activated by binding cAMP. Through simultaneous binding of PDE3B to RAPGEF3 and PIK3R6 is assembled in a signaling complex in which it activates the PI3K gamma complex and which is involved in angiogenesis. Plays a role in the modulation of the cAMP-induced dynamic control of endothelial barrier function through a pathway that is independent on Rho-mediated signaling. Required for the actin rearrangement at cell-cell junctions, such as stress fibers and junctional actin. This chain is Rap guanine nucleotide exchange factor 3 (Rapgef3), found in Rattus norvegicus (Rat).